A 218-amino-acid chain; its full sequence is Oxidoreductase claN (218 aa).

NADP(+) contacts are provided by Lys-38, Asp-57, and Asn-82. Ser-134 acts as the Proton donor in catalysis. Positions 148, 152, and 183 each coordinate NADP(+). Residue Tyr-148 is the Proton acceptor of the active site. Residue Lys-152 is the Lowers pKa of active site Tyr of the active site.

This sequence belongs to the short-chain dehydrogenases/reductases (SDR) family.

Its pathway is pigment biosynthesis. Functionally, oxidoreductase; part of the gene cluster that mediates the biosynthesis of the bianthraquinone cladofulvin, a conidial pigment not required for virulence but that plays a role in fitness and resistance to environmental stresses including UV light and low-temperature stress. The pathway begins with the synthesis of atrochrysone thioester by the polyketide synthase (PKS) claG. The atrochrysone carboxyl ACP thioesterase claF then breaks the thioester bond and releases the atrochrysone carboxylic acid from claG. This compound is decarboxylated by claH to yield emodin, which is further converted to chrysophanol hydroquinone by the reductase claC and the dehydratase claB. The cytochrome P450 monooxygenase claM then catalyzes the dimerization of nataloe-emodin to cladofulvin. In Passalora fulva (Tomato leaf mold), this protein is Oxidoreductase claN.